We begin with the raw amino-acid sequence, 183 residues long: Cell division protein ZapC (183 aa).

It belongs to the ZapC family. In terms of assembly, interacts directly with FtsZ.

It is found in the cytoplasm. Functionally, contributes to the efficiency of the cell division process by stabilizing the polymeric form of the cell division protein FtsZ. Acts by promoting interactions between FtsZ protofilaments and suppressing the GTPase activity of FtsZ. This Xenorhabdus bovienii (strain SS-2004) (Xenorhabdus nematophila subsp. bovienii) protein is Cell division protein ZapC.